Consider the following 608-residue polypeptide: Probable methyltransferase PMT3 (608 aa).

At 1–12 the chain is on the cytoplasmic side; it reads MKGRSDGGQKKR. Residues 13-33 form a helical; Signal-anchor for type II membrane protein membrane-spanning segment; that stretch reads VIALVCVAAVVLVFVYLFYGS. Residues 34-608 are Lumenal-facing; the sequence is SDHRASAIEY…LTSESLRDME (575 aa). N342 carries an N-linked (GlcNAc...) asparagine glycan.

Belongs to the methyltransferase superfamily.

The protein resides in the golgi apparatus membrane. In Arabidopsis thaliana (Mouse-ear cress), this protein is Probable methyltransferase PMT3.